The sequence spans 535 residues: MASLSLAPVNIFKAGADEERAETARLSSFIGAIAIGDLVKSTLGPKGMDKILLSSGRDAALMVTNDGATILKNIGVDNPAAKVLVDMSRVQDDEVGDGTTSVTVLAAELLREAESLIAKKIHPQTIISGWREATKAAREALLSSAVDHGSDEARFWQDLMNIAGTTLSSKLLTHHKDHFTKLAVEAVLRLKGSGNLEAIHVIKKLGGSLADSYLDEGFLLDKKIGVNQPKRIENAKILIANTGMDTDKIKIFGSRVRVDSTAKVAEIEHAEKEKMKEKVERILKHGINCFINRQLIYNYPEQLFGAAGVMAIEHADFAGVERLALVTGGEIASTFDHPELVKLGSCKLIEEVMIGEDKLIHFSGVALGEACTIVLRGATQQILDEAERSLHDALCVLAQTVKDPRTVYGGGCSEMLMAHAVTQLANRTPGKEAVAMESFAKALRMLPTIIADNAGYDSADLVAQLRAAHSEGHITAGLDMKEGTIGDMAVLGITESFQVKRQVLLSAAEAAEVILRVDNIIKAAPRKRVPDHHPC.

Ala-2 carries the N-acetylalanine modification. Ser-3 bears the Phosphoserine mark. Lys-13 carries the post-translational modification N6-acetyllysine. Gly-44 contributes to the ADP binding site. Gly-44 serves as a coordination point for ATP. Position 97 (Asp-97) interacts with Mg(2+). Residues Gly-98, Thr-99, Thr-100, Ser-101, Ser-168, and Ser-169 each contribute to the ADP site. ATP contacts are provided by Gly-98, Thr-99, and Thr-100. An N6-acetyllysine modification is found at Lys-181. A Glycyl lysine isopeptide (Lys-Gly) (interchain with G-Cter in SUMO2) cross-link involves residue Lys-248. Ser-260 bears the Phosphoserine mark. Thr-261 bears the Phosphothreonine mark. Residues Gly-410, Glu-495, and Lys-500 each coordinate ADP. ATP contacts are provided by Glu-495 and Lys-500.

This sequence belongs to the TCP-1 chaperonin family. As to quaternary structure, component of the chaperonin-containing T-complex (TRiC), a hexadecamer composed of two identical back-to-back stacked rings enclosing a protein folding chamber. Each ring is made up of eight different subunits: TCP1/CCT1, CCT2, CCT3, CCT4, CCT5, CCT6A/CCT6, CCT7, CCT8. Interacts with PACRG. Interacts with FLCN. Interacts with DLEC1. Interacts with SVEP1. The N-terminus is blocked.

It localises to the cytoplasm. The catalysed reaction is ATP + H2O = ADP + phosphate + H(+). Its function is as follows. Component of the chaperonin-containing T-complex (TRiC), a molecular chaperone complex that assists the folding of actin, tubulin and other proteins upon ATP hydrolysis. The TRiC complex mediates the folding of WRAP53/TCAB1, thereby regulating telomere maintenance. As part of the TRiC complex may play a role in the assembly of BBSome, a complex involved in ciliogenesis regulating transports vesicles to the cilia. This chain is T-complex protein 1 subunit beta (Cct2), found in Mus musculus (Mouse).